Here is a 189-residue protein sequence, read N- to C-terminus: Xanthine phosphoribosyltransferase (189 aa).

2 residues coordinate xanthine: L20 and N27. 128–132 contributes to the 5-phospho-alpha-D-ribose 1-diphosphate binding site; that stretch reads ANGKA. K156 contacts xanthine.

It belongs to the purine/pyrimidine phosphoribosyltransferase family. Xpt subfamily. In terms of assembly, homodimer.

It is found in the cytoplasm. The catalysed reaction is XMP + diphosphate = xanthine + 5-phospho-alpha-D-ribose 1-diphosphate. It functions in the pathway purine metabolism; XMP biosynthesis via salvage pathway; XMP from xanthine: step 1/1. In terms of biological role, converts the preformed base xanthine, a product of nucleic acid breakdown, to xanthosine 5'-monophosphate (XMP), so it can be reused for RNA or DNA synthesis. The polypeptide is Xanthine phosphoribosyltransferase (Pseudomonas syringae pv. syringae (strain B728a)).